A 363-amino-acid chain; its full sequence is NudC domain-containing protein 3 (363 aa).

Positions 120–143 (AADLSGPQEVEKEEPPGSQDPEHT) are disordered. Basic and acidic residues predominate over residues 128–143 (EVEKEEPPGSQDPEHT). The region spanning 187–279 (AIRENYIWSQ…VGEYWWSAIL (93 aa)) is the CS domain. Serine 342 and serine 357 each carry phosphoserine.

The chain is NudC domain-containing protein 3 (Nudcd3) from Mus musculus (Mouse).